The following is a 367-amino-acid chain: Phospho-N-acetylmuramoyl-pentapeptide-transferase (367 aa).

The next 10 helical transmembrane spans lie at 28-48 (GALM…IGWL), 75-95 (TMGG…WADL), 96-116 (TNAY…IGFI), 134-154 (FKLV…THTA), 175-195 (LMIN…VGSG), 206-226 (GLAI…AYVV), 243-263 (AGEI…FLWW), 271-291 (FMGD…AVAI), 295-315 (LVLA…MVQV), and 344-364 (TIVI…LATL).

This sequence belongs to the glycosyltransferase 4 family. MraY subfamily. Mg(2+) serves as cofactor.

It is found in the cell inner membrane. The enzyme catalyses UDP-N-acetyl-alpha-D-muramoyl-L-alanyl-gamma-D-glutamyl-meso-2,6-diaminopimeloyl-D-alanyl-D-alanine + di-trans,octa-cis-undecaprenyl phosphate = di-trans,octa-cis-undecaprenyl diphospho-N-acetyl-alpha-D-muramoyl-L-alanyl-D-glutamyl-meso-2,6-diaminopimeloyl-D-alanyl-D-alanine + UMP. Its pathway is cell wall biogenesis; peptidoglycan biosynthesis. In terms of biological role, catalyzes the initial step of the lipid cycle reactions in the biosynthesis of the cell wall peptidoglycan: transfers peptidoglycan precursor phospho-MurNAc-pentapeptide from UDP-MurNAc-pentapeptide onto the lipid carrier undecaprenyl phosphate, yielding undecaprenyl-pyrophosphoryl-MurNAc-pentapeptide, known as lipid I. In Maricaulis maris (strain MCS10) (Caulobacter maris), this protein is Phospho-N-acetylmuramoyl-pentapeptide-transferase.